A 214-amino-acid polypeptide reads, in one-letter code: MATTRKPRGGAGGATQPALDFDAPGEIVCGVDEAGRGPLAGPVVAAAVVLDPARPIVGLDDSKALSAKKRERLFDEIVAYALAYSVASASVEEIDSLNILHATMLAMKRAVEGLSVLPTLAKIDGNRCPMLAIRSEAIVGGDALVPSISAASILAKVTRDRMLVELHQQFPMYGFDAHAGYGTPQHLAALREHGPCEHHRRSFAPVREAFDLIR.

The 189-residue stretch at 26–214 folds into the RNase H type-2 domain; the sequence is EIVCGVDEAG…PVREAFDLIR (189 aa). Aspartate 32, glutamate 33, and aspartate 124 together coordinate a divalent metal cation.

The protein belongs to the RNase HII family. It depends on Mn(2+) as a cofactor. The cofactor is Mg(2+).

The protein localises to the cytoplasm. The enzyme catalyses Endonucleolytic cleavage to 5'-phosphomonoester.. Endonuclease that specifically degrades the RNA of RNA-DNA hybrids. This Burkholderia mallei (strain NCTC 10247) protein is Ribonuclease HII.